Reading from the N-terminus, the 423-residue chain is Serine--tRNA ligase (423 aa).

Residues Pro107–Pro130 form a disordered region. A compositionally biased stretch (basic and acidic residues) spans Ser110–Arg124. Residue Thr231 to Glu233 coordinates L-serine. Arg262–Glu264 contacts ATP. An L-serine-binding site is contributed by Glu285. Glu349–Ser352 is an ATP binding site. Ser385 serves as a coordination point for L-serine.

It belongs to the class-II aminoacyl-tRNA synthetase family. Type-1 seryl-tRNA synthetase subfamily. As to quaternary structure, homodimer. The tRNA molecule binds across the dimer.

It is found in the cytoplasm. The enzyme catalyses tRNA(Ser) + L-serine + ATP = L-seryl-tRNA(Ser) + AMP + diphosphate + H(+). It carries out the reaction tRNA(Sec) + L-serine + ATP = L-seryl-tRNA(Sec) + AMP + diphosphate + H(+). It functions in the pathway aminoacyl-tRNA biosynthesis; selenocysteinyl-tRNA(Sec) biosynthesis; L-seryl-tRNA(Sec) from L-serine and tRNA(Sec): step 1/1. Its function is as follows. Catalyzes the attachment of serine to tRNA(Ser). Is also able to aminoacylate tRNA(Sec) with serine, to form the misacylated tRNA L-seryl-tRNA(Sec), which will be further converted into selenocysteinyl-tRNA(Sec). This Coxiella burnetii (strain Dugway 5J108-111) protein is Serine--tRNA ligase.